The following is a 410-amino-acid chain: Indoleamine 2,3-dioxygenase nanC (410 aa).

His309 contacts heme.

Belongs to the indoleamine 2,3-dioxygenase family. Heme is required as a cofactor.

It carries out the reaction D-tryptophan + O2 = N-formyl-D-kynurenine. The catalysed reaction is L-tryptophan + O2 = N-formyl-L-kynurenine. The protein operates within secondary metabolite biosynthesis. Its function is as follows. Indoleamine 2,3-dioxygenase; part of the gene cluster that mediates the biosynthesis of the benzazepine alkaloid nanangelenin A which contains an unprecedented 3,4-dihydro-1-benzazepine-2,5-dione-N-prenyl-N-acetoxy-anthranilamide scaffold. The first step of nanangelenin biosynthesis is catalyzed by the indoleamine 2,3-dioxygenase nanC which produces N-formyl-kynurenine through the catabolism of tryptophan. The two-module NRPS nanA then utilizes anthranilate (Ant) and L-kynurenine (L-Kyn) to assemble the dipeptide product nanangelenin B. The first adenylation domain of nanA (A1) loads anthranilate onto the T1 domain, while A2 loads kynurenine, generated through spontaneous nonenzymatic deformylation of the nanC-supplied N-formyl-kynurenine. The peptide bond formation between the tethered amino acids is catalyzed by the first condensation domain (C1) between anthranilate's carbonyl carbon and kynurenine's aliphatic primary amine. The second C domain (C2) catalyzes the final cyclization event between the aromatic amine of kynurenine and the tethered carbonyl carbon, yielding nanangelenin B. The terminal T3 domain enhances the catalytic efficiency of C2, suggesting the T2-tethered Ant-L-Kyn is transferred to T3 prior to cyclization by C2. Once released from nanA, nanangelenin B is then prenylated by the prenyltransferase nanD to form nanangelenin C. Nanangelenin C is then N-hydroxylated by the FAD-dependent monooxygenase nanF and further acetylated by the acetyltransferase nanB to yield nanangelenin F. Finally, the N-methyltransferase nanE methylates the amide nitrogen of 1-benzazepine to convert nanangelenin F into nanangelenin A. NanE is also able to methylate most of the intermediates of the pathway such as nanangelenin B and nanangelenin C to produce nanangelenin D and nanangelenin E, respectively. The polypeptide is Indoleamine 2,3-dioxygenase nanC (Aspergillus nanangensis).